Reading from the N-terminus, the 338-residue chain is Aspartate-semialdehyde dehydrogenase (338 aa).

NADP(+) contacts are provided by residues 13–16 (TGAV) and 41–42 (RS). A phosphate-binding site is contributed by R101. C130 functions as the Acyl-thioester intermediate in the catalytic mechanism. Q157 lines the substrate pocket. Residue 160–161 (SG) coordinates NADP(+). K214 serves as a coordination point for phosphate. R236 is a binding site for substrate. H243 serves as the catalytic Proton acceptor. Residue Q316 coordinates NADP(+).

It belongs to the aspartate-semialdehyde dehydrogenase family. As to quaternary structure, homodimer.

The catalysed reaction is L-aspartate 4-semialdehyde + phosphate + NADP(+) = 4-phospho-L-aspartate + NADPH + H(+). It functions in the pathway amino-acid biosynthesis; L-lysine biosynthesis via DAP pathway; (S)-tetrahydrodipicolinate from L-aspartate: step 2/4. Its pathway is amino-acid biosynthesis; L-methionine biosynthesis via de novo pathway; L-homoserine from L-aspartate: step 2/3. It participates in amino-acid biosynthesis; L-threonine biosynthesis; L-threonine from L-aspartate: step 2/5. Catalyzes the NADPH-dependent formation of L-aspartate-semialdehyde (L-ASA) by the reductive dephosphorylation of L-aspartyl-4-phosphate. This Synechocystis sp. (strain ATCC 27184 / PCC 6803 / Kazusa) protein is Aspartate-semialdehyde dehydrogenase (asd).